A 100-amino-acid polypeptide reads, in one-letter code: NADH-quinone oxidoreductase subunit K (100 aa).

A run of 3 helical transmembrane segments spans residues tyrosine 4–valine 24, isoleucine 28–alanine 48, and valine 60–isoleucine 80.

Belongs to the complex I subunit 4L family. NDH-1 is composed of 14 different subunits. Subunits NuoA, H, J, K, L, M, N constitute the membrane sector of the complex.

The protein localises to the cell inner membrane. It catalyses the reaction a quinone + NADH + 5 H(+)(in) = a quinol + NAD(+) + 4 H(+)(out). NDH-1 shuttles electrons from NADH, via FMN and iron-sulfur (Fe-S) centers, to quinones in the respiratory chain. The immediate electron acceptor for the enzyme in this species is believed to be ubiquinone. Couples the redox reaction to proton translocation (for every two electrons transferred, four hydrogen ions are translocated across the cytoplasmic membrane), and thus conserves the redox energy in a proton gradient. This chain is NADH-quinone oxidoreductase subunit K, found in Sulfurihydrogenibium azorense (strain DSM 15241 / OCM 825 / Az-Fu1).